The primary structure comprises 296 residues: Cytoplasmic envelopment protein 1 (296 aa).

This sequence belongs to the herpesviridae cytoplasmic envelopment protein 1 family. Interacts with UL51; this interaction allows incorporation of UL7 within the virion.

The protein resides in the virion. The protein localises to the virion tegument. It localises to the host cytoplasm. It is found in the host Golgi apparatus. Functionally, plays a critical role in cytoplasmic virus egress. Participates in the final step of tegumentation and envelope acquisition within the host cytoplasm. This Human herpesvirus 1 (strain 17) (HHV-1) protein is Cytoplasmic envelopment protein 1 (UL7).